Reading from the N-terminus, the 311-residue chain is Aspartate carbamoyltransferase catalytic subunit (311 aa).

The carbamoyl phosphate site is built by R59 and T60. K87 is a binding site for L-aspartate. Carbamoyl phosphate-binding residues include R109, H139, and Q142. L-aspartate-binding residues include R172 and R224. Positions 265 and 266 each coordinate carbamoyl phosphate.

Belongs to the aspartate/ornithine carbamoyltransferase superfamily. ATCase family. In terms of assembly, heterododecamer (2C3:3R2) of six catalytic PyrB chains organized as two trimers (C3), and six regulatory PyrI chains organized as three dimers (R2).

It catalyses the reaction carbamoyl phosphate + L-aspartate = N-carbamoyl-L-aspartate + phosphate + H(+). The protein operates within pyrimidine metabolism; UMP biosynthesis via de novo pathway; (S)-dihydroorotate from bicarbonate: step 2/3. In terms of biological role, catalyzes the condensation of carbamoyl phosphate and aspartate to form carbamoyl aspartate and inorganic phosphate, the committed step in the de novo pyrimidine nucleotide biosynthesis pathway. The chain is Aspartate carbamoyltransferase catalytic subunit from Streptococcus equi subsp. equi (strain 4047).